Here is a 311-residue protein sequence, read N- to C-terminus: Regulator of rDNA transcription protein 6 (311 aa).

2 consecutive transmembrane segments (helical) span residues proline 32–leucine 52 and tyrosine 271–threonine 291.

Its subcellular location is the membrane. Its function is as follows. May be involved in the modulation of rDNA transcription. The chain is Regulator of rDNA transcription protein 6 (RRT6) from Saccharomyces cerevisiae (strain ATCC 204508 / S288c) (Baker's yeast).